The following is a 228-amino-acid chain: Ribosomal RNA small subunit methyltransferase G (228 aa).

S-adenosyl-L-methionine is bound by residues Gly70, Leu75, 120 to 121 (AE), and Arg138. Residues 207–228 (RRGDTRGPNRRVSPRRTGGAPA) form a disordered region.

The protein belongs to the methyltransferase superfamily. RNA methyltransferase RsmG family.

It localises to the cytoplasm. Its function is as follows. Specifically methylates the N7 position of guanine in position 518 of 16S rRNA. In Mycobacterium marinum (strain ATCC BAA-535 / M), this protein is Ribosomal RNA small subunit methyltransferase G.